A 922-amino-acid chain; its full sequence is Lysine-specific demethylase 4 (922 aa).

Residues 1–15 (MASAATTTHFPSSRI) show a composition bias toward polar residues. 2 disordered regions span residues 1-21 (MASA…EPCA) and 42-61 (SSSC…MFTD). The JmjN domain maps to 87–130 (VLTFYPTMREFKNFSQYIKKIEQNGGHLKAGIAKIVAPEGWTPR). Tyr-213 contacts 2-oxoglutarate. A JmjC domain is found at 223-388 (DAQVEEWNMN…YGKDAVLCDC (166 aa)). Residues His-265 and Glu-267 each contribute to the Fe cation site. The 2-oxoglutarate site is built by Asn-275 and Lys-283. 2 residues coordinate Zn(2+): Cys-314 and His-320. A 2-oxoglutarate-binding site is contributed by Lys-321. His-356 serves as a coordination point for Fe cation. The Zn(2+) site is built by Cys-386 and Cys-388. Positions 435-475 (KRRQSLADASKIAKRARLGASSTATDSDGSSGSSGSEEATE) are disordered. Residues 453–475 (GASSTATDSDGSSGSSGSEEATE) show a composition bias toward low complexity. Residues 639 to 675 (TTSCQLCELRGGALIPCQIGTDSTWAHVACALFNRRA) form a C2HC pre-PHD-type zinc finger. The segment at 723 to 783 (WECVVCHRTD…GVVMICHKHE (61 aa)) adopts a PHD-type; degenerate zinc-finger fold.

It belongs to the JHDM3 histone demethylase family. The cofactor is Fe(2+).

It localises to the nucleus. The enzyme catalyses N(6),N(6),N(6)-trimethyl-L-lysyl(9)-[histone H3] + 2 2-oxoglutarate + 2 O2 = N(6)-methyl-L-lysyl(9)-[histone H3] + 2 formaldehyde + 2 succinate + 2 CO2. It carries out the reaction N(6),N(6),N(6)-trimethyl-L-lysyl(36)-[histone H3] + 2 2-oxoglutarate + 2 O2 = N(6)-methyl-L-lysyl(36)-[histone H3] + 2 formaldehyde + 2 succinate + 2 CO2. Functionally, histone demethylase that specifically demethylates 'Lys-9' and 'Lys-36' residues of histone H3, thereby playing a central role in histone code. Demethylation of Lys residue generates formaldehyde and succinate. Involved in the negative regulation of lifespan in a germline-dependent fashion. The protein is Lysine-specific demethylase 4 (jmjd-2) of Caenorhabditis elegans.